We begin with the raw amino-acid sequence, 183 residues long: ADP-ribosylation factor-like protein 1 (183 aa).

The N-myristoyl glycine moiety is linked to residue G2. GTP-binding positions include 25 to 32 (GLDGAGKT), 68 to 72 (DLGGQ), and 127 to 130 (NKQD).

Belongs to the small GTPase superfamily. Arf family. In terms of assembly, homodimer. Interacts with IMH1 (via GRIP domain); the interaction is dependent on GTP. Interacts with MON2.

Its subcellular location is the golgi apparatus. Recruits golgins such as IMH1 to the Golgi. Can bind and hydrolyze GTP. May be involved in trafficking events within the endosomal system. The chain is ADP-ribosylation factor-like protein 1 (ARL1) from Saccharomyces cerevisiae (strain ATCC 204508 / S288c) (Baker's yeast).